Consider the following 608-residue polypeptide: Signal transduction histidine-protein kinase AtoS (608 aa).

The Cytoplasmic segment spans residues 1–15 (MHYMKWIYPRRLRNQ). The helical transmembrane segment at 16–36 (MILMAILMVIVPTLTIGYIVE) threads the bilayer. Residues 37 to 189 (TEGRSAVLSE…DIRRQAWKMD (153 aa)) lie on the Periplasmic side of the membrane. The helical transmembrane segment at 190–210 (VRIIIVLTAGLLISLLLIVLF) threads the bilayer. Residues 211 to 608 (SRRLSANIDI…PINPQGNQTV (398 aa)) are Cytoplasmic-facing. The 51-residue stretch at 212 to 262 (RRLSANIDIITDGLSTLAQNIPTRLPQLPGEMGQISQSVNNLAQALRETRT) folds into the HAMP domain. The PAS domain maps to 260–305 (TRTLNDLIIENAADGVIAIDRQGDVTTMNPAAEVITGYQRHELVGQ). One can recognise a PAC domain in the interval 326–382 (HGTEHVALEISFPGRDRTIELSVTTSRIHNTHGEMIGALVIFSDLTARKETQRRMAQ). The Histidine kinase domain occupies 395-602 (GVAHEVRNPL…TFTLILPINP (208 aa)). H398 is modified (phosphohistidine; by autocatalysis).

In terms of assembly, homodimer. Autophosphorylated. Each AtoS molecule may phosphorylate its partner within the dimer rather than phosphorylating itself.

The protein resides in the cell inner membrane. It catalyses the reaction ATP + protein L-histidine = ADP + protein N-phospho-L-histidine.. Functionally, member of the two-component regulatory system AtoS/AtoC. In the presence of acetoacetate, AtoS/AtoC stimulates the expression of the atoDAEB operon, leading to short chain fatty acid catabolism and activation of the poly-(R)-3-hydroxybutyrate (cPHB) biosynthetic pathway. Also induces the operon in response to spermidine. Involved in the regulation of motility and chemotaxis, via transcriptional induction of the flagellar regulon. AtoS is a membrane-associated kinase that phosphorylates and activates AtoC in response to environmental signals. The protein is Signal transduction histidine-protein kinase AtoS (atoS) of Escherichia coli (strain K12).